A 204-amino-acid chain; its full sequence is CASP-like protein 2U1 (204 aa).

Residues 1-36 are Cytoplasmic-facing; it reads MGVLGGDAHVPIGSQVSPGSVVVTNNESFGHRKLLK. The chain crosses the membrane as a helical span at residues 37-57; sequence GVDFLVRIKAFAFCLAVIVLL. The Extracellular portion of the chain corresponds to 58–84; that stretch reads KNNVQTTVIAPGIVLQAKYNNTKAPVS. Residue Asn77 is glycosylated (N-linked (GlcNAc...) asparagine). Residues 85 to 105 traverse the membrane as a helical segment; it reads LLVLASICCGYAFLQAVVSLL. Residues 106 to 117 lie on the Cytoplasmic side of the membrane; that stretch reads SFIRDKRVLNNT. Residues 118-138 form a helical membrane-spanning segment; it reads VLAWLTFLLDQVLTYLLLGSA. The Extracellular segment spans residues 139–170; that stretch reads AATAEAAYIAKRGEDKVQWKAVCGPFKRFCDH. A helical transmembrane segment spans residues 171–191; the sequence is FAATVFLSFIAVIAFAVSAAI. Over 192-204 the chain is Cytoplasmic; the sequence is SAYYLFRRSKGFK.

The protein belongs to the Casparian strip membrane proteins (CASP) family. In terms of assembly, homodimer and heterodimers.

It is found in the cell membrane. The sequence is that of CASP-like protein 2U1 from Selaginella moellendorffii (Spikemoss).